We begin with the raw amino-acid sequence, 516 residues long: Extracellular endo-inulinase inuB (516 aa).

The signal sequence occupies residues 1–25; it reads MLNPKVAYMVWMTCLGLTLPSQAQS. Residues 40-43, Gln-59, Trp-67, and 99-100 each bind substrate; these read WMNE and FT. Glu-43 is an active-site residue. A glycan (N-linked (GlcNAc...) asparagine) is linked at Asn-109. Substrate contacts are provided by residues 175-176 and Glu-233; that span reads RD. Asn-372, Asn-419, and Asn-424 each carry an N-linked (GlcNAc...) asparagine glycan.

Belongs to the glycosyl hydrolase 32 family.

The protein resides in the secreted. It carries out the reaction Endohydrolysis of (2-&gt;1)-beta-D-fructosidic linkages in inulin.. In terms of biological role, endo-inulinase involved in utilization of the plant storage polymer inulin, consisting of fructooligosaccharides with a degree of polymerization (DP) value from 2 to 60. In Aspergillus niger, this protein is Extracellular endo-inulinase inuB (inuB).